We begin with the raw amino-acid sequence, 698 residues long: Methionine--tRNA ligase (698 aa).

The short motif at 21–31 is the 'HIGH' region element; sequence PYANGPLHFGH. Zn(2+) is bound by residues Cys-153, Cys-156, Cys-166, and Cys-169. A 'KMSKS' region motif is present at residues 341 to 345; it reads QFSKS. Lys-344 lines the ATP pocket. Residues 599–698 form the tRNA-binding domain; sequence DFRKLDLRVG…EDVAPGSLVS (100 aa).

The protein belongs to the class-I aminoacyl-tRNA synthetase family. MetG type 1 subfamily. In terms of assembly, homodimer. The cofactor is Zn(2+).

It is found in the cytoplasm. The enzyme catalyses tRNA(Met) + L-methionine + ATP = L-methionyl-tRNA(Met) + AMP + diphosphate. Is required not only for elongation of protein synthesis but also for the initiation of all mRNA translation through initiator tRNA(fMet) aminoacylation. This Protochlamydia amoebophila (strain UWE25) protein is Methionine--tRNA ligase.